A 179-amino-acid chain; its full sequence is Large ribosomal subunit protein uL5 (179 aa).

The protein belongs to the universal ribosomal protein uL5 family. As to quaternary structure, part of the 50S ribosomal subunit; part of the 5S rRNA/L5/L18/L25 subcomplex. Contacts the 5S rRNA and the P site tRNA. Forms a bridge to the 30S subunit in the 70S ribosome.

In terms of biological role, this is one of the proteins that bind and probably mediate the attachment of the 5S RNA into the large ribosomal subunit, where it forms part of the central protuberance. In the 70S ribosome it contacts protein S13 of the 30S subunit (bridge B1b), connecting the 2 subunits; this bridge is implicated in subunit movement. Contacts the P site tRNA; the 5S rRNA and some of its associated proteins might help stabilize positioning of ribosome-bound tRNAs. In Vibrio cholerae serotype O1 (strain ATCC 39541 / Classical Ogawa 395 / O395), this protein is Large ribosomal subunit protein uL5.